The primary structure comprises 1219 residues: Type IV pilus biogenesis factor PilY1 homolog PD_0502 (1219 aa).

An N-terminal signal peptide occupies residues 1 to 35 (MVGMSRIILNNLFFFRCVVAVFSAHSLVISGAVHA). Residues 212-234 (GLSTDPLNTEGQPYDPSRHPLNS) are disordered. Ca(2+) contacts are provided by Q958, N960, I962, and D964.

The protein belongs to the PilY1 family.

It localises to the fimbrium. In terms of biological role, one of the three PilY1 homologs of X.fastidiosa, which are involved in bacterial twitching motility as component of the filamentous type IV pili (T4P). The sequence is that of Type IV pilus biogenesis factor PilY1 homolog PD_0502 from Xylella fastidiosa (strain Temecula1 / ATCC 700964).